The sequence spans 252 residues: uncharacterized protein (252 aa).

Its subcellular location is the plastid. It localises to the chloroplast. This is an uncharacterized protein from Guillardia theta (Cryptophyte).